The following is a 357-amino-acid chain: Protein Wnt-8c (357 aa).

Residues 1-16 (MRGSTFLLLSIVGIYG) form the signal peptide. C55 and C66 are disulfide-bonded. N104 carries N-linked (GlcNAc...) asparagine glycosylation. Disulfide bonds link C105-C113, C115-C133, C181-C195, C183-C190, C260-C298, C276-C291, C313-C328, C315-C325, and C320-C321. S187 carries the O-palmitoleoyl serine lipid modification. N263 and N282 each carry an N-linked (GlcNAc...) asparagine glycan. N346 is a glycosylation site (N-linked (GlcNAc...) asparagine).

The protein belongs to the Wnt family. In terms of processing, palmitoleoylation is required for efficient binding to frizzled receptors. Depalmitoleoylation leads to Wnt signaling pathway inhibition. Post-translationally, proteolytic processing by tiki1 and tiki2 promotes oxidation and formation of large disulfide-bond oligomers, leading to inactivation of wnt8c. As to expression, cells that form rhombomere 4. Hensen node and the neural plate immediately anterior to it.

The protein resides in the secreted. It localises to the extracellular space. The protein localises to the extracellular matrix. Ligand for members of the frizzled family of seven transmembrane receptors. Probable developmental protein. Is likely to signal over only few cell diameters. May be involved in the regulation of axis formation and in the rhombomere specification. This chain is Protein Wnt-8c (WNT8C), found in Gallus gallus (Chicken).